The following is a 143-amino-acid chain: Small ribosomal subunit protein eS6 (143 aa).

The protein belongs to the eukaryotic ribosomal protein eS6 family.

The sequence is that of Small ribosomal subunit protein eS6 from Methanoregula boonei (strain DSM 21154 / JCM 14090 / 6A8).